The following is a 128-amino-acid chain: Small ribosomal subunit protein uS11 (128 aa).

This sequence belongs to the universal ribosomal protein uS11 family. Part of the 30S ribosomal subunit. Interacts with proteins S7 and S18. Binds to IF-3.

In terms of biological role, located on the platform of the 30S subunit, it bridges several disparate RNA helices of the 16S rRNA. Forms part of the Shine-Dalgarno cleft in the 70S ribosome. The protein is Small ribosomal subunit protein uS11 of Ligilactobacillus salivarius (strain UCC118) (Lactobacillus salivarius).